Consider the following 1170-residue polypeptide: Anion exchange protein 3 (1170 aa).

The Cytoplasmic portion of the chain corresponds to 1 to 656 (MGRSYNEKDF…DLKDALDTQC (656 aa)). Disordered stretches follow at residues 17 to 96 (FHHT…PQLS), 112 to 167 (FHME…TTRG), and 239 to 267 (HLVK…RRKR). Over residues 32-53 (RFRKRVLSMDRRRKRKRKKKKT) the composition is skewed to basic residues. Over residues 67–76 (VDEEEAESEI) the composition is skewed to acidic residues. Positions 246 to 259 (RCQLPRSSNGSPPL) are enriched in polar residues. A run of 5 helical transmembrane segments spans residues 657-677 (IAAV…FGGL), 702-722 (FSLL…LLVF), 744-764 (IGFW…SFLV), 774-794 (IFAF…LIKV), and 828-848 (PNTA…AFFL). Residues 657–1170 (IAAVIFIYFA…DEYNEIHMLV (514 aa)) form a membrane (anion exchange) region. Topologically, residues 849–863 (RKLRNSRFLGGKVRR) are cytoplasmic. 5 helical membrane-spanning segments follow: residues 864-884 (VIGD…DILI), 919-939 (FPVW…ILIF), 966-986 (LLLI…WLTA), 1020-1063 (RVTG…LTGI), and 1104-1124 (IVLL…FILI).

This sequence belongs to the anion exchanger (TC 2.A.31) family. Widely expressed at low levels.

It is found in the cell membrane. The catalysed reaction is hydrogencarbonate(in) + chloride(out) = hydrogencarbonate(out) + chloride(in). Its function is as follows. Sodium-independent anion exchanger which mediates the electroneutral exchange of chloride for bicarbonate ions across the cell membrane. May be involved in the regulation of intracellular pH, and the modulation of cardiac action potential. This chain is Anion exchange protein 3, found in Danio rerio (Zebrafish).